The primary structure comprises 353 residues: Phosphoribosylformylglycinamidine cyclo-ligase (353 aa).

This sequence belongs to the AIR synthase family.

It is found in the cytoplasm. It catalyses the reaction 2-formamido-N(1)-(5-O-phospho-beta-D-ribosyl)acetamidine + ATP = 5-amino-1-(5-phospho-beta-D-ribosyl)imidazole + ADP + phosphate + H(+). It participates in purine metabolism; IMP biosynthesis via de novo pathway; 5-amino-1-(5-phospho-D-ribosyl)imidazole from N(2)-formyl-N(1)-(5-phospho-D-ribosyl)glycinamide: step 2/2. This chain is Phosphoribosylformylglycinamidine cyclo-ligase, found in Pseudomonas aeruginosa (strain LESB58).